The following is a 311-amino-acid chain: Methionyl-tRNA formyltransferase (311 aa).

Residue 110–113 (SLLP) coordinates (6S)-5,6,7,8-tetrahydrofolate.

Belongs to the Fmt family.

It carries out the reaction L-methionyl-tRNA(fMet) + (6R)-10-formyltetrahydrofolate = N-formyl-L-methionyl-tRNA(fMet) + (6S)-5,6,7,8-tetrahydrofolate + H(+). Functionally, attaches a formyl group to the free amino group of methionyl-tRNA(fMet). The formyl group appears to play a dual role in the initiator identity of N-formylmethionyl-tRNA by promoting its recognition by IF2 and preventing the misappropriation of this tRNA by the elongation apparatus. This Streptococcus pyogenes serotype M18 (strain MGAS8232) protein is Methionyl-tRNA formyltransferase.